The primary structure comprises 767 residues: AMP deaminase 3 (767 aa).

2 positions are modified to phosphoserine: Ser-85 and Ser-107. 2 disordered regions span residues 89 to 111 (QMPP…PTTP) and 181 to 205 (LGHP…PLPQ). 2 residues coordinate Zn(2+): His-317 and His-319. Residues His-319 and 388 to 393 (KFNSKY) each bind substrate. His-586 is a binding site for Zn(2+). Glu-589 contacts substrate. His-608 acts as the Proton acceptor in catalysis. A Zn(2+)-binding site is contributed by Asp-663. 664–667 (DPMQ) is a binding site for substrate.

The protein belongs to the metallo-dependent hydrolases superfamily. Adenosine and AMP deaminases family. Homotetramer. Zn(2+) is required as a cofactor.

It carries out the reaction AMP + H2O + H(+) = IMP + NH4(+). It functions in the pathway purine metabolism; IMP biosynthesis via salvage pathway; IMP from AMP: step 1/1. In terms of biological role, AMP deaminase plays a critical role in energy metabolism. This Homo sapiens (Human) protein is AMP deaminase 3.